Here is a 329-residue protein sequence, read N- to C-terminus: Deoxynucleotidyltransferase terminal-interacting protein 1 (329 aa).

Disordered regions lie at residues 1-22 (MGATGDAEQPRGPSGAERGGLE) and 147-178 (KRGRQAEEECAHRGSPLPKKRKGRPPGHILSS). The segment at 56 to 147 (MTTSFTDPAI…RLTHELPGIK (92 aa)) is important for dimerization. Over residues 147 to 158 (KRGRQAEEECAH) the composition is skewed to basic and acidic residues. The a.T hook DNA-binding region spans 159 to 173 (RGSPLPKKRKGRPPG). S161 carries the phosphoserine modification. The Nuclear localization signal motif lies at 164–170 (PKKRKGR). The interval 197–316 (REGPKWDPAR…MRKYMETLRT (120 aa)) is important for DNA and nucleosome binding. The H-T-H motif DNA-binding region spans 216–237 (GSRANKALGMGGTRGRIYIKHP).

Monomer and homodimer. A minor proportion may form homotrimers. Interacts with ZNF541. Interacts with the terminal deoxynucleotidyltransferase DNTT. Interacts with TRERF1. Identified in a histone deacetylase complex that contains DNTTIP1, HDAC1 and MIDEAS; this complex assembles into a tetramer that contains four copies of each protein chain. Component of a histone deacetylase complex containing DNTTIP1, ZNF541, HDAC1 and HDAC2. Identified in a complex with KCTD19, HDAC1, HDAC2 and ZNF541.

It is found in the nucleus. Functionally, increases DNTT terminal deoxynucleotidyltransferase activity (in vitro). Also acts as a transcriptional regulator, binding to the consensus sequence 5'-GNTGCATG-3' following an AT-tract. Associates with RAB20 promoter and positively regulates its transcription. Binds DNA and nucleosomes; may recruit HDAC1 complexes to nucleosomes or naked DNA. This Homo sapiens (Human) protein is Deoxynucleotidyltransferase terminal-interacting protein 1 (DNTTIP1).